We begin with the raw amino-acid sequence, 501 residues long: MMAKKYVLALDQGTTSCRAILFDRDSNIVGVAQKEFTQIYPKPGWVEHNAEEIWSTQYGVIAEVVAKTGIKPEEIASIGITNQRETTVVWNKNTGKPVYNAIVWQCRRTTEICDELKVKGLEETFKKKTGLVVDAYFSGTKVKWILDNVPGTREMAEKGELLFGTMDTWLIWKLTGGQVHVTDYSNASRTLMYNIRELCWDEELLGYLNVPMSLLPTVKASSEVYGYTQPDQFLGHSVPIAGVAGDQQAALFGQACYEPGMAKNTYGTGCFMLMNTGDEVYESKNGLLTTIAWGLDGKVTYALEGSIFIAGAAIQWLRDGLKILESAPDSEYFASKVDGTDGVYLVPAFAGLGAPYWDMRARGAIVGLTRGTTKEHIIRAALDSLAYQTKDVLGAMEADSNIKLQALKVDGGAVANNLLMQFQADILGVPVERPQVIETTALGAAYLAGLAVGFWESKEELAKRWKLDYQFESVMAEDQRNKLYNGWEKAVGRSMDWATEE.

An ADP-binding site is contributed by T14. Residues T14, T15, and S16 each contribute to the ATP site. Residue T14 participates in sn-glycerol 3-phosphate binding. R18 contacts ADP. R84, E85, Y136, and D246 together coordinate sn-glycerol 3-phosphate. Residues R84, E85, Y136, D246, and Q247 each coordinate glycerol. T268 and G311 together coordinate ADP. T268, G311, Q315, and G412 together coordinate ATP. ADP contacts are provided by G412 and N416.

It belongs to the FGGY kinase family. Homotetramer and homodimer (in equilibrium).

It catalyses the reaction glycerol + ATP = sn-glycerol 3-phosphate + ADP + H(+). Its pathway is polyol metabolism; glycerol degradation via glycerol kinase pathway; sn-glycerol 3-phosphate from glycerol: step 1/1. Activated by phosphorylation and inhibited by fructose 1,6-bisphosphate (FBP). Key enzyme in the regulation of glycerol uptake and metabolism. Catalyzes the phosphorylation of glycerol to yield sn-glycerol 3-phosphate. This chain is Glycerol kinase, found in Desulforamulus reducens (strain ATCC BAA-1160 / DSM 100696 / MI-1) (Desulfotomaculum reducens).